Consider the following 474-residue polypeptide: Methylenetetrahydrofolate--tRNA-(uracil-5-)-methyltransferase TrmFO (474 aa).

9 to 14 contacts FAD; sequence GGGLAG.

The protein belongs to the MnmG family. TrmFO subfamily. FAD is required as a cofactor.

Its subcellular location is the cytoplasm. It catalyses the reaction uridine(54) in tRNA + (6R)-5,10-methylene-5,6,7,8-tetrahydrofolate + NADH + H(+) = 5-methyluridine(54) in tRNA + (6S)-5,6,7,8-tetrahydrofolate + NAD(+). The enzyme catalyses uridine(54) in tRNA + (6R)-5,10-methylene-5,6,7,8-tetrahydrofolate + NADPH + H(+) = 5-methyluridine(54) in tRNA + (6S)-5,6,7,8-tetrahydrofolate + NADP(+). Catalyzes the folate-dependent formation of 5-methyl-uridine at position 54 (M-5-U54) in all tRNAs. The sequence is that of Methylenetetrahydrofolate--tRNA-(uracil-5-)-methyltransferase TrmFO from Methylorubrum extorquens (strain PA1) (Methylobacterium extorquens).